An 86-amino-acid polypeptide reads, in one-letter code: Large ribosomal subunit protein bL27 (86 aa).

Residues 1 to 24 (MAHKKAGGSSRNGRDSEGRRLGVK) are disordered.

It belongs to the bacterial ribosomal protein bL27 family.

This Magnetococcus marinus (strain ATCC BAA-1437 / JCM 17883 / MC-1) protein is Large ribosomal subunit protein bL27.